The sequence spans 341 residues: Phenylalanine--tRNA ligase alpha subunit (341 aa).

Glu-254 provides a ligand contact to Mg(2+).

It belongs to the class-II aminoacyl-tRNA synthetase family. Phe-tRNA synthetase alpha subunit type 1 subfamily. As to quaternary structure, tetramer of two alpha and two beta subunits. The cofactor is Mg(2+).

The protein localises to the cytoplasm. It catalyses the reaction tRNA(Phe) + L-phenylalanine + ATP = L-phenylalanyl-tRNA(Phe) + AMP + diphosphate + H(+). This chain is Phenylalanine--tRNA ligase alpha subunit, found in Chlorobium phaeovibrioides (strain DSM 265 / 1930) (Prosthecochloris vibrioformis (strain DSM 265)).